The following is a 581-amino-acid chain: Guanine nucleotide-binding protein-like 3 homolog (581 aa).

Residues 1–49 (MALKRLKTKKSKRLTGRLKHKIEKKVRDHNKKERRAAKKNPKKGSKKQK) are compositionally biased toward basic residues. The segment at 1–50 (MALKRLKTKKSKRLTGRLKHKIEKKVRDHNKKERRAAKKNPKKGSKKQKL) is disordered. Residues 64-108 (LKEVEEAKQRQEAERLARREAFKAEREQNKFKTLESMVEDADMRS) adopt a coiled-coil conformation. At Ser-99 the chain carries Phosphoserine. The 185-residue stretch at 141 to 325 (FKEFRKVIEN…LIDCPGIVFT (185 aa)) folds into the CP-type G domain. GTP contacts are provided by residues 189-192 (NKAD), 274-281 (GIPNVGKS), and 318-321 (DCPG). A compositionally biased stretch (basic and acidic residues) spans 500-517 (KPAKGRKRKLDEEKEKVD). Positions 500–519 (KPAKGRKRKLDEEKEKVDPS) are disordered.

Belongs to the TRAFAC class YlqF/YawG GTPase family.

Its subcellular location is the nucleus. The protein localises to the nucleolus. Functionally, may play a role in regulating cellular proliferation. The chain is Guanine nucleotide-binding protein-like 3 homolog (Ns1) from Drosophila melanogaster (Fruit fly).